Reading from the N-terminus, the 447-residue chain is Adenylosuccinate synthetase (447 aa).

Residues 12-18 and 40-42 each bind GTP; these read GDEGKGK and GHT. The active-site Proton acceptor is the D13. 2 residues coordinate Mg(2+): D13 and G40. Residues 13 to 16, 38 to 41, T128, R142, Q223, T238, and R302 contribute to the IMP site; these read DEGK and NAGH. Catalysis depends on H41, which acts as the Proton donor. 298 to 304 serves as a coordination point for substrate; that stretch reads TTTGRKR. Residues R304, 330–332, and 412–414 contribute to the GTP site; these read KLD and SLG.

This sequence belongs to the adenylosuccinate synthetase family. In terms of assembly, homodimer. It depends on Mg(2+) as a cofactor.

It localises to the cytoplasm. It carries out the reaction IMP + L-aspartate + GTP = N(6)-(1,2-dicarboxyethyl)-AMP + GDP + phosphate + 2 H(+). Its pathway is purine metabolism; AMP biosynthesis via de novo pathway; AMP from IMP: step 1/2. In terms of biological role, plays an important role in the de novo pathway of purine nucleotide biosynthesis. Catalyzes the first committed step in the biosynthesis of AMP from IMP. The polypeptide is Adenylosuccinate synthetase (Nostoc sp. (strain PCC 7120 / SAG 25.82 / UTEX 2576)).